Here is a 90-residue protein sequence, read N- to C-terminus: Acylphosphatase (90 aa).

An Acylphosphatase-like domain is found at 3–90 (KKQFIVYGLV…REFTDFSVRY (88 aa)). Catalysis depends on residues R18 and N36.

Belongs to the acylphosphatase family.

It carries out the reaction an acyl phosphate + H2O = a carboxylate + phosphate + H(+). The polypeptide is Acylphosphatase (acyP) (Pasteurella multocida (strain Pm70)).